A 333-amino-acid chain; its full sequence is Glycerol-3-phosphate dehydrogenase [NAD(P)+] (333 aa).

Positions 13, 14, 34, and 108 each coordinate NADPH. Sn-glycerol 3-phosphate-binding residues include Lys108, Gly137, and Ser139. Ala141 contributes to the NADPH binding site. Sn-glycerol 3-phosphate contacts are provided by Lys192, Asp245, Ser255, Arg256, and Asn257. The active-site Proton acceptor is the Lys192. Arg256 contacts NADPH. Glu282 lines the NADPH pocket.

This sequence belongs to the NAD-dependent glycerol-3-phosphate dehydrogenase family.

It localises to the cytoplasm. The enzyme catalyses sn-glycerol 3-phosphate + NAD(+) = dihydroxyacetone phosphate + NADH + H(+). It catalyses the reaction sn-glycerol 3-phosphate + NADP(+) = dihydroxyacetone phosphate + NADPH + H(+). The protein operates within membrane lipid metabolism; glycerophospholipid metabolism. In terms of biological role, catalyzes the reduction of the glycolytic intermediate dihydroxyacetone phosphate (DHAP) to sn-glycerol 3-phosphate (G3P), the key precursor for phospholipid synthesis. This chain is Glycerol-3-phosphate dehydrogenase [NAD(P)+], found in Thioalkalivibrio sulfidiphilus (strain HL-EbGR7).